The primary structure comprises 345 residues: S-adenosylmethionine:tRNA ribosyltransferase-isomerase (345 aa).

The protein belongs to the QueA family. Monomer.

It localises to the cytoplasm. It catalyses the reaction 7-aminomethyl-7-carbaguanosine(34) in tRNA + S-adenosyl-L-methionine = epoxyqueuosine(34) in tRNA + adenine + L-methionine + 2 H(+). It functions in the pathway tRNA modification; tRNA-queuosine biosynthesis. In terms of biological role, transfers and isomerizes the ribose moiety from AdoMet to the 7-aminomethyl group of 7-deazaguanine (preQ1-tRNA) to give epoxyqueuosine (oQ-tRNA). This Lactococcus lactis subsp. lactis (strain IL1403) (Streptococcus lactis) protein is S-adenosylmethionine:tRNA ribosyltransferase-isomerase.